Reading from the N-terminus, the 165-residue chain is K(+)/H(+) antiporter subunit KhtT (165 aa).

Residues 76-161 form the RCK C-terminal domain; that stretch reads LESIEMAFSD…LKKLIHDFLS (86 aa).

As to quaternary structure, the transporter is composed of the integral membrane protein KhtU and the regulatory protein KhtT.

The protein resides in the cell membrane. Binds cyclic di-AMP (c-di-AMP), which may regulate the activity. Required for activity of the potassium/proton antiporter KhtU. Involved in protection of the cell from methylglyoxal, a toxic by-product of glycolysis. The polypeptide is K(+)/H(+) antiporter subunit KhtT (Bacillus subtilis (strain 168)).